Reading from the N-terminus, the 256-residue chain is Peroxisomal membrane protein PMP30B (256 aa).

Belongs to the peroxin-11 family.

Its subcellular location is the peroxisome membrane. In terms of biological role, involved in peroxisomal proliferation. Could participate in peroxisomal elongation or fission. May be involved in parceling of peroxisomes into regular quanta. In Candida boidinii (Yeast), this protein is Peroxisomal membrane protein PMP30B (PEX11B).